Here is a 345-residue protein sequence, read N- to C-terminus: Probable dual-specificity RNA methyltransferase RlmN (345 aa).

Residue E98 is the Proton acceptor of the active site. Residues 104 to 332 enclose the Radical SAM core domain; that stretch reads TYKRLTVCVS…VSIRYSRGLE (229 aa). Residues C111 and C337 are joined by a disulfide bond. Residues C118, C122, and C125 each coordinate [4Fe-4S] cluster. S-adenosyl-L-methionine contacts are provided by residues 165-166, S195, 218-220, and N294; these read GE and SLH. The active-site S-methylcysteine intermediate is C337.

Belongs to the radical SAM superfamily. RlmN family. The cofactor is [4Fe-4S] cluster.

The protein localises to the cytoplasm. It catalyses the reaction adenosine(2503) in 23S rRNA + 2 reduced [2Fe-2S]-[ferredoxin] + 2 S-adenosyl-L-methionine = 2-methyladenosine(2503) in 23S rRNA + 5'-deoxyadenosine + L-methionine + 2 oxidized [2Fe-2S]-[ferredoxin] + S-adenosyl-L-homocysteine. The catalysed reaction is adenosine(37) in tRNA + 2 reduced [2Fe-2S]-[ferredoxin] + 2 S-adenosyl-L-methionine = 2-methyladenosine(37) in tRNA + 5'-deoxyadenosine + L-methionine + 2 oxidized [2Fe-2S]-[ferredoxin] + S-adenosyl-L-homocysteine. Functionally, specifically methylates position 2 of adenine 2503 in 23S rRNA and position 2 of adenine 37 in tRNAs. This chain is Probable dual-specificity RNA methyltransferase RlmN, found in Trichodesmium erythraeum (strain IMS101).